A 117-amino-acid polypeptide reads, in one-letter code: Protein GL2-INTERACTING REPRESSOR 2 (117 aa).

Residues 1-56 (MSRRNKNGPKLELRLNLSPPPSQASQMSLVRSPNRSNTTSPSSCVSSETNQEENET) form a disordered region. Positions 10–15 (KLELRL) match the EAR motif. A compositionally biased stretch (low complexity) spans 31-49 (RSPNRSNTTSPSSCVSSET).

As to quaternary structure, interacts with GL2. Interacts with TPL.

The protein localises to the nucleus. Its function is as follows. Acts as a negative regulator of root hair development redundantly with GIR1. GIR1 and GIR2 may function as adapter proteins that associate with GL2 and participate in the control of root hair formation. GIR1 and GIR2 may function as adapter proteins that associate with TPL and participate in the repression of root gene expression. The chain is Protein GL2-INTERACTING REPRESSOR 2 from Arabidopsis thaliana (Mouse-ear cress).